The chain runs to 146 residues: Hemoglobin subunit beta-1 (146 aa).

One can recognise a Globin domain in the interval His2 to His146. Residues His63 and His92 each contribute to the heme b site.

Belongs to the globin family. In terms of assembly, hb1 is a heterotetramer of two alpha chains and two beta-1 chains. As to expression, red blood cells.

Its function is as follows. Involved in oxygen transport from gills to the various peripheral tissues. The protein is Hemoglobin subunit beta-1 of Dissostichus eleginoides (Patagonian toothfish).